A 617-amino-acid polypeptide reads, in one-letter code: Dihydroxy-acid dehydratase (617 aa).

Asp81 lines the Mg(2+) pocket. Position 122 (Cys122) interacts with [2Fe-2S] cluster. Positions 123 and 124 each coordinate Mg(2+). Lys124 bears the N6-carboxylysine mark. Cys195 lines the [2Fe-2S] cluster pocket. Position 492 (Glu492) interacts with Mg(2+). Residue Ser518 is the Proton acceptor of the active site.

It belongs to the IlvD/Edd family. As to quaternary structure, homodimer. Requires [2Fe-2S] cluster as cofactor. The cofactor is Mg(2+).

The catalysed reaction is (2R)-2,3-dihydroxy-3-methylbutanoate = 3-methyl-2-oxobutanoate + H2O. It catalyses the reaction (2R,3R)-2,3-dihydroxy-3-methylpentanoate = (S)-3-methyl-2-oxopentanoate + H2O. The protein operates within amino-acid biosynthesis; L-isoleucine biosynthesis; L-isoleucine from 2-oxobutanoate: step 3/4. Its pathway is amino-acid biosynthesis; L-valine biosynthesis; L-valine from pyruvate: step 3/4. Functions in the biosynthesis of branched-chain amino acids. Catalyzes the dehydration of (2R,3R)-2,3-dihydroxy-3-methylpentanoate (2,3-dihydroxy-3-methylvalerate) into 2-oxo-3-methylpentanoate (2-oxo-3-methylvalerate) and of (2R)-2,3-dihydroxy-3-methylbutanoate (2,3-dihydroxyisovalerate) into 2-oxo-3-methylbutanoate (2-oxoisovalerate), the penultimate precursor to L-isoleucine and L-valine, respectively. This Xanthobacter autotrophicus (strain ATCC BAA-1158 / Py2) protein is Dihydroxy-acid dehydratase.